A 207-amino-acid polypeptide reads, in one-letter code: Large ribosomal subunit protein uL4 (207 aa).

Residues 58–78 are disordered; the sequence is AGGGKKPWRQKGTGRARHGSI. Residues 63-77 are compositionally biased toward basic residues; it reads KPWRQKGTGRARHGS.

Belongs to the universal ribosomal protein uL4 family. As to quaternary structure, part of the 50S ribosomal subunit.

In terms of biological role, one of the primary rRNA binding proteins, this protein initially binds near the 5'-end of the 23S rRNA. It is important during the early stages of 50S assembly. It makes multiple contacts with different domains of the 23S rRNA in the assembled 50S subunit and ribosome. Functionally, forms part of the polypeptide exit tunnel. This chain is Large ribosomal subunit protein uL4, found in Aster yellows witches'-broom phytoplasma (strain AYWB).